Reading from the N-terminus, the 342-residue chain is Methylthioribose-1-phosphate isomerase (342 aa).

Residues Arg49–Ala51, Arg86, and Gln187 contribute to the substrate site. The Proton donor role is filled by Asp228. Residue Asn238–Lys239 coordinates substrate.

Belongs to the eIF-2B alpha/beta/delta subunits family. MtnA subfamily.

The enzyme catalyses 5-(methylsulfanyl)-alpha-D-ribose 1-phosphate = 5-(methylsulfanyl)-D-ribulose 1-phosphate. Its pathway is amino-acid biosynthesis; L-methionine biosynthesis via salvage pathway; L-methionine from S-methyl-5-thio-alpha-D-ribose 1-phosphate: step 1/6. Its function is as follows. Catalyzes the interconversion of methylthioribose-1-phosphate (MTR-1-P) into methylthioribulose-1-phosphate (MTRu-1-P). In Enterobacter sp. (strain 638), this protein is Methylthioribose-1-phosphate isomerase.